A 202-amino-acid polypeptide reads, in one-letter code: Sperm-specific H1/protamine-like protein type 1 (202 aa).

The span at 1 to 35 (MPSPSRKSRSRSRSRSKSPKRSPAKKARKTPKKPR) shows a compositional bias: basic residues. Disordered regions lie at residues 1 to 46 (MPSP…PTTL) and 104 to 202 (KTSA…QFAL). One can recognise an H15 domain in the interval 41-120 (KKPTTLSMIV…GATGSFRVGK (80 aa)). Residues 126-156 (KKAKKAKSPKKKSSKKSKNKSNNAKAKKSPK) are compositionally biased toward basic residues. The span at 177–187 (GARYPFRYQAY) shows a compositional bias: low complexity.

In terms of processing, OE1 and OE3 are produced by post-translational cleavage of a common precursor. In terms of tissue distribution, sperm.

It localises to the nucleus. The protein resides in the chromosome. In terms of biological role, linker histones are implicated in chromatin remodeling and/or transcriptional regulation during spermiogenesis, the process of spermatid maturation into spermatozoa. Protamines substitute for histones in the chromatin of sperm during the haploid phase of spermatogenesis. They compact sperm DNA into a highly condensed, stable and inactive complex. This is Sperm-specific H1/protamine-like protein type 1 from Ostrea edulis (Native oyster).